Consider the following 142-residue polypeptide: gSG7 salivary protein (142 aa).

A signal peptide spans 1–25 (METKLVLALIACGVICLLQTTPTEA). 2 disulfide bridges follow: cysteine 83/cysteine 138 and cysteine 106/cysteine 116.

Interacts with host coagulation factor XII (F12) (inactive and activated). Interacts with host high molecular weight kininogen (KNG1) (inactive and activated).

It localises to the secreted. Zn(2+) modulates binding to host coagulation factor XII (F12) and high molecular weight kininogen (KNG1). Salivary protein with anticoagulant activity. Inhibits activation of host kallikrein-kinin system by preventing the reciprocal activation of coagulation factor XII (F12) and prekallikrein (KLKB1), and subsequent release of bradykinin. Inhibits host factor XII and high molecular weight kininogen (KNG1) binding to negatively charged surfaces. Weakly inhibits the alternative pathway of complement system activation in the host. The sequence is that of gSG7 salivary protein from Anopheles stephensi (Indo-Pakistan malaria mosquito).